The following is a 78-amino-acid chain: Mu-conotoxin BuIIIB (78 aa).

A signal peptide spans 1-22 (MMSKLGVLLTICLLLFPLFALP). The propeptide occupies 23 to 51 (QDGDQPADRPAERMQDDISSEQNPLLEKR). The tract at residues 26–46 (DQPADRPAERMQDDISSEQNP) is disordered. Residues 28–38 (PADRPAERMQD) show a composition bias toward basic and acidic residues. 3 disulfides stabilise this stretch: cysteine 56/cysteine 68, cysteine 57/cysteine 74, and cysteine 64/cysteine 75. At cysteine 75 the chain carries Cysteine amide.

It belongs to the conotoxin M superfamily. In terms of tissue distribution, expressed by the venom duct.

It localises to the secreted. In terms of biological role, mu-conotoxins block voltage-gated sodium channels (Nav). This synthetic toxin potently blocks rNav1.4/SCN4A (Kd=0.34-3.6 nM), rNav1.2/SCN2A (Kd=13 nM), rNav1.3/SCN3A (Kd=200 nM), rNav1.1/SCN1A (Kd=360 nM), mNav1.6/SCN8A (IC(50)=1.8 uM), rNav1.5/SCN5A (IC(50)=9 uM), rNav1.6/SCN8A (IC(50)&gt;30 uM). It is noteworthy that the toxin is 50-fold more potent on mouse Nav1.6 than on rat Nav1.6. The block of SCN4A is very slowly reversible. The sequence is that of Mu-conotoxin BuIIIB from Conus bullatus (Bubble cone).